The chain runs to 122 residues: Large ribosomal subunit protein uL14 (122 aa).

The protein belongs to the universal ribosomal protein uL14 family. In terms of assembly, part of the 50S ribosomal subunit. Forms a cluster with proteins L3 and L19. In the 70S ribosome, L14 and L19 interact and together make contacts with the 16S rRNA in bridges B5 and B8.

Binds to 23S rRNA. Forms part of two intersubunit bridges in the 70S ribosome. The chain is Large ribosomal subunit protein uL14 from Mycoplasmopsis agalactiae (strain NCTC 10123 / CIP 59.7 / PG2) (Mycoplasma agalactiae).